We begin with the raw amino-acid sequence, 238 residues long: MILDFEESLRAFRKGSPVLIYDFEDREGETDIAIPAIHVGKDEVAMMRIDGGGLICVAIHPVAAEKLGLPFMHDVLRIASEKLPEIRKVADADDIKYDSRSSFSLWVNHRDTFTGITDVDRALTIRRIGEVVDEVMMGKKVDFGREFRSPGHVALLRAADKLTYERVGQTELSVALAEMAGIAPAVAICEMLDAETGKALTKEKAMEYAEEKGIPFIDGRTIVEHYRKFREVEVSLFV.

D-ribulose 5-phosphate contacts are provided by residues 26–27, Asp31, 166–170, and Glu190; these read RE and RVGQT. A Mg(2+)-binding site is contributed by Glu27.

Belongs to the DHBP synthase family. In terms of assembly, homodimer. It depends on Mg(2+) as a cofactor. The cofactor is Mn(2+).

The enzyme catalyses D-ribulose 5-phosphate = (2S)-2-hydroxy-3-oxobutyl phosphate + formate + H(+). It functions in the pathway cofactor biosynthesis; riboflavin biosynthesis; 2-hydroxy-3-oxobutyl phosphate from D-ribulose 5-phosphate: step 1/1. Functionally, catalyzes the conversion of D-ribulose 5-phosphate to formate and 3,4-dihydroxy-2-butanone 4-phosphate. This chain is 3,4-dihydroxy-2-butanone 4-phosphate synthase, found in Archaeoglobus fulgidus (strain ATCC 49558 / DSM 4304 / JCM 9628 / NBRC 100126 / VC-16).